The primary structure comprises 1035 residues: Potassium-transporting ATPase alpha chain 1 (1035 aa).

The segment at 1–41 is disordered; the sequence is MGKAENYELYSVELGPGPGGDMAAKMSKKKKAGGGGGKRKE. At 1 to 98 the chain is on the cytoplasmic side; it reads MGKAENYELY…NALRPPRGTP (98 aa). 2 positions are modified to phosphotyrosine: Tyr7 and Tyr10. Basic residues predominate over residues 26–40; it reads MSKKKKAGGGGGKRK. Phosphoserine is present on Ser27. The chain crosses the membrane as a helical span at residues 99–119; it reads EYVKFARQLAGGLQCLMWVAA. Residues 120–142 lie on the Lumenal side of the membrane; sequence AICLIAFAIQASEGDLTTDDNLY. A helical transmembrane segment spans residues 143–163; the sequence is LAIALIAVVVVTGCFGYYQEF. The Cytoplasmic segment spans residues 164–299; it reads KSTNIIASFK…NEKTPIAIEI (136 aa). The helical transmembrane segment at 300 to 319 threads the bilayer; it reads EHFVDIIAGLAILFGATFFI. Over 320 to 331 the chain is Lumenal; that stretch reads VAMCIGYTFLRA. A helical membrane pass occupies residues 332–349; sequence MVFFMAIVVAYVPEGLLA. Positions 340, 341, 343, and 345 each coordinate K(+). At 350–783 the chain is on the cytoplasmic side; the sequence is TVTVCLSLTA…EQGRLIFDNL (434 aa). The 4-aspartylphosphate intermediate role is filled by Asp387. Mg(2+) is bound by residues Asp387 and Thr389. Residues Ser463 and Ser601 each carry the phosphoserine modification. 2 residues coordinate Mg(2+): Asp728 and Asp732. The helical transmembrane segment at 784–803 threads the bilayer; the sequence is KKSIAYTLTKNIPELTPYLI. Glu797 is a K(+) binding site. Topologically, residues 804-813 are lumenal; that stretch reads YITVSVPLPL. A helical transmembrane segment spans residues 814–834; that stretch reads GCITILFIELCTDIFPSVSLA. A K(+)-binding site is contributed by Glu822. The Cytoplasmic segment spans residues 835–854; sequence YEKAESDIMHLRPRNPKRDR. Phosphoserine is present on Ser840. A helical membrane pass occupies residues 855–877; that stretch reads LVNEPLAAYSYFQIGAIQSFAGF. The Lumenal segment spans residues 878–929; sequence TDYFTAMAQEGWFPLLCVGLRAQWEDHHLQDLQDSYGQEWTFGQRLYQQYTC. A helical membrane pass occupies residues 930–949; it reads YTVFFISIEVCQIADVLIRK. Topologically, residues 950–963 are cytoplasmic; that stretch reads TRRLSAFQQGFFRN. Position 954 is a phosphoserine; by PKA (Ser954). The chain crosses the membrane as a helical span at residues 964–982; sequence KILVIAIVFQVCIGCFLCY. At 983–997 the chain is on the lumenal side; the sequence is CPGMPNIFNFMPIRF. A helical transmembrane segment spans residues 998-1018; sequence QWWLVPLPYGILIFVYDEIRK. Over 1019–1035 the chain is Cytoplasmic; it reads LGVRCCPGSWWDQELYY.

This sequence belongs to the cation transport ATPase (P-type) (TC 3.A.3) family. Type IIC subfamily. The gastric H(+)/K(+) ATPase pump is composed of the catalytic alpha subunit ATP4A and the regulatory beta subunit ATP4B. Interacts (via the P-domain) with ATP4B (via N-terminus); this interaction stabilizes the lumenal-open E2 conformation state and prevents the reverse reaction of the transport cycle. As to expression, expressed in gastric parietal cells (at protein level).

Its subcellular location is the apical cell membrane. The enzyme catalyses K(+)(out) + ATP + H2O + H(+)(in) = K(+)(in) + ADP + phosphate + 2 H(+)(out). The catalytic subunit of the gastric H(+)/K(+) ATPase pump which transports H(+) ions in exchange for K(+) ions across the apical membrane of parietal cells. Uses ATP as an energy source to pump H(+) ions to the gastric lumen while transporting K(+) ion from the lumen into the cell. Remarkably generates a million-fold proton gradient across the gastric parietal cell membrane, acidifying the gastric juice down to pH 1. Within a transport cycle, the transfer of a H(+) ion across the membrane is coupled to ATP hydrolysis and is associated with a transient phosphorylation that shifts the pump conformation from inward-facing (E1) to outward-facing state (E2). The release of the H(+) ion in the stomach lumen is followed by binding of K(+) ion converting the pump conformation back to the E1 state. This Homo sapiens (Human) protein is Potassium-transporting ATPase alpha chain 1.